Here is a 2647-residue protein sequence, read N- to C-terminus: Filamin-A (2647 aa).

Positions 1-37 are disordered; sequence MSSSHSRCGQSAAVASPGGSIDSRDAEMPATEKDLAE. The residue at position 2 (Ser2) is an N-acetylserine. Positions 2 to 274 are actin-binding; that stretch reads SSSHSRCGQS…PKAKLKPGAP (273 aa). A phosphoserine mark is found at Ser11, Ser16, and Ser20. Basic and acidic residues predominate over residues 22–37; sequence DSRDAEMPATEKDLAE. Glycyl lysine isopeptide (Lys-Gly) (interchain with G-Cter in ubiquitin) cross-links involve residues Lys42, Lys43, and Lys135. Calponin-homology (CH) domains are found at residues 43–149 and 166–269; these read KIQQ…LHYS and QTPK…KAKL. Residues 271–294 form a disordered region; that stretch reads PGAPLRPKLNPKKARAYGPGIEPT. Filamin repeat units lie at residues 276-374, 376-474, 475-570, 571-663, 667-763, 764-866, 867-965, 966-1061, 1062-1154, 1155-1249, 1250-1349, 1350-1442, 1443-1539, 1540-1636, and 1641-1740; these read RPKL…EVYV, KSQG…TVTV, GQAC…EVKV, GTEC…MADI, PQDF…RVNV, GAGS…RVKV, EPSH…SVGV, SPSL…PLEA, VAPT…KAHV, APCF…KLQV, EPAV…QVPV, TEGC…KVPV, HDVT…KVKV, LPTH…RVRA, and DASK…QVTA. Residue Lys299 forms a Glycyl lysine isopeptide (Lys-Gly) (interchain with G-Cter in SUMO1); alternate linkage. A Glycyl lysine isopeptide (Lys-Gly) (interchain with G-Cter in SUMO2); alternate cross-link involves residue Lys299. Residues Lys376 and Lys508 each carry the N6-acetyllysine modification. An N6-acetyllysine mark is found at Lys700, Lys781, Lys837, Lys865, and Lys906. Residues Ser968 and Ser1055 each carry the phosphoserine modification. N6-acetyllysine; alternate is present on Lys1071. Position 1071 is an N6-succinyllysine; alternate (Lys1071). Ser1084 carries the post-translational modification Phosphoserine. At Thr1089 the chain carries Phosphothreonine. Ser1301 and Ser1338 each carry phosphoserine. Lys1372 carries the N6-acetyllysine modification. Phosphoserine is present on residues Ser1459 and Ser1533. The segment at 1490 to 1607 is interaction with furin; it reads PKGLVEPVDV…DNHDGTYTVA (118 aa). Lys1538 is modified (N6-acetyllysine). A phosphoserine mark is found at Ser1630 and Ser1734. The segment at 1741–1778 is hinge 1; it reads LAGDQPTVQTPLRSQQLAPQYNYPQGSQQTWIPERPMV. At Thr1750 the chain carries Phosphothreonine. Filamin repeat units lie at residues 1765–1860, 1861–1952, 1953–2039, 2042–2134, 2135–2230, 2233–2325, 2327–2420, and 2424–2516; these read QGSQ…QFYV, DYVN…TARV, TGDD…PVVI, SEIG…SVKV, TGEG…QFTV, LGEG…VVPV, SPSG…KIRV, and GHGG…KAKV. Position 1835 is a phosphoserine (Ser1835). Phosphoserine occurs at positions 1967, 2053, 2128, 2152, 2158, 2163, 2180, 2284, 2327, and 2329. Thr2336 is modified (phosphothreonine). Phosphoserine occurs at positions 2338, 2370, 2414, 2510, 2523, and 2526. The segment at 2517 to 2553 is hinge 2; it reads TGPRLVSNHSLHETSSVFVDSLTKVATVPQHATSGPG. Residues 2517–2647 form a self-association site, tail region; it reads TGPRLVSNHS…PGSPYRIMVP (131 aa). Residues 2552 to 2646 form a Filamin 24 repeat; sequence PGPADVSKVV…IPGSPYRIMV (95 aa). The residue at position 2569 (Lys2569) is an N6-acetyllysine; alternate. The residue at position 2569 (Lys2569) is an N6-succinyllysine; alternate. Lys2575 is modified (N6-acetyllysine). Thr2599 is modified (phosphothreonine). 2 positions are modified to N6-acetyllysine: Lys2607 and Lys2621.

The protein belongs to the filamin family. As to quaternary structure, homodimer. Interacts with FCGR1A, FLNB, FURIN, HSPB7, KCND2, INPPL1, MYOT, MYOZ1, PDLIM2, ARHGAP24, PSEN1, PSEN2 and ECSCR. Also interacts with various other binding partners in addition to filamentous actin. Interacts (via N-terminus) with TAF1B. Interacts (via N-terminus) with MIS18BP1 (via N-terminus). Interacts with TMEM67 (via C-terminus) and MKS1. Interacts (via actin-binding domain) with MICALL2 (via calponin-homology (CH) domain). Interacts with RFLNA and RFLNB. Interacts (via filamin repeat 5) with SYK; docks SYK to the plasma membrane. Interacts (via filamin repeats 19 and 21) with DRD3; increased PKA-mediated phosphorylation at Ser-2152. Interacts (via filamin repeat 21) with MAS1, AGTR1 and ADRA1D; increases PKA-mediated phosphorylation of FLNA at Ser-2152. Interacts (via filamin repeats 4, 9, 12, 17, 19, 21, and 23) with GP1BA (high affinity), ITGB7, ITGB2 and FBLIM1. Interacts with CEACAM1 (via cytoplasmic domain); inhibits cell migration and cell scattering by interfering with the interaction between FLNA and RALA. Interacts with FOXC1. Interacts (via calponin-homology (CH) domain 1 and filamin repeat 24) with CRMP1; the interaction alters FLNA ternary structure and thus promotes FLNA dissociation from F-actin. Interacts with DPYSL3/CRMP3 and DPYSL4/CRMP4. Post-translationally, phosphorylation at Ser-2152 is negatively regulated by the autoinhibited conformation of filamin repeats 19-21. Ligand binding induces a conformational switch triggering phosphorylation at Ser-2152 by PKA. In terms of processing, polyubiquitination in the CH1 domain by a SCF-like complex containing ASB2 leads to proteasomal degradation. Prior dissociation from actin may be required to expose the target lysines. Ubiquitinated in endothelial cells by RNF213 downstream of the non-canonical Wnt signaling pathway, leading to its degradation by the proteasome. Widely expressed. Highly expressed in Purkinje cells.

It is found in the cytoplasm. The protein localises to the cell cortex. Its subcellular location is the cytoskeleton. The protein resides in the perikaryon. It localises to the cell projection. It is found in the growth cone. The protein localises to the podosome. In terms of biological role, actin binding protein that promotes orthogonal branching of actin filaments and links actin filaments to membrane glycoproteins. Anchors various transmembrane proteins to the actin cytoskeleton and serves as a scaffold for a wide range of cytoplasmic signaling proteins. Interaction with FLNB may allow neuroblast migration from the ventricular zone into the cortical plate. Tethers cell surface-localized furin, modulates its rate of internalization and directs its intracellular trafficking. Involved in ciliogenesis. Plays a role in cell-cell contacts and adherens junctions during the development of blood vessels, heart and brain organs. Plays a role in platelets morphology through interaction with SYK that regulates ITAM- and ITAM-like-containing receptor signaling, resulting in by platelet cytoskeleton organization maintenance. During the axon guidance process, required for growth cone collapse induced by SEMA3A-mediated stimulation of neurons. This chain is Filamin-A (Flna), found in Mus musculus (Mouse).